A 78-amino-acid polypeptide reads, in one-letter code: Large ribosomal subunit protein bL28 (78 aa).

The protein belongs to the bacterial ribosomal protein bL28 family.

This chain is Large ribosomal subunit protein bL28, found in Francisella tularensis subsp. holarctica (strain FTNF002-00 / FTA).